The primary structure comprises 475 residues: MAATTRRLLYYVSKRFSTAGVRRSYGGLPQSNSKSPPSSSQRLMELESEFSAHNYHPVPVVFSRANGSTIWDPEGKRYIDFLAAYSAVNQGHCHPKIMKALQEQVEKLTLSSRAFYNDKFPVFAERLTNMFGYDMVLPMNTGAEGVETALKLARKWGHEKKNIPKDEAIIVSCCGCFHGRTLAIVSMSCDNDATRGFGPLLPGNLKVDFGDADSLEKIFKEKGDRIAGFLFEPIQGEAGVIIPPDGYLKAVRELCTKYNVLMIADEVQSGLARSGKMLACDWEEIRPDMVILGKALGGGVIPVSAVLADKDVMLHIKPGQHGSTFGGNPLASAVAMASLDVIVEEKLVERSASLGEELRIQLNEIKKQFPKYIKEVRGRGLFNAIEFNSESLSPVSAYDICLSLKERGVLAKPTHNTIVRLTPPLSISSDELRDGSEALHDVLELDLPNLLKINSGKTPVSHITECDRCGRNLYA.

The N-terminal 16 residues, 1 to 16 (MAATTRRLLYYVSKRF), are a transit peptide targeting the mitochondrion. Residues 23–43 (RSYGGLPQSNSKSPPSSSQRL) form a disordered region. A compositionally biased stretch (low complexity) spans 29 to 41 (PQSNSKSPPSSSQ). Residues 142-143 (GA) and F177 contribute to the pyridoxal 5'-phosphate site. Position 180 (R180) interacts with L-ornithine. 265–268 (DEVQ) lines the pyridoxal 5'-phosphate pocket. At K294 the chain carries N6-(pyridoxal phosphate)lysine. S323 provides a ligand contact to L-ornithine. T324 lines the pyridoxal 5'-phosphate pocket.

This sequence belongs to the class-III pyridoxal-phosphate-dependent aminotransferase family. Homotetramer. Requires pyridoxal 5'-phosphate as cofactor.

The protein resides in the mitochondrion matrix. It carries out the reaction a 2-oxocarboxylate + L-ornithine = L-glutamate 5-semialdehyde + an L-alpha-amino acid. Its pathway is amino-acid biosynthesis; L-proline biosynthesis; L-glutamate 5-semialdehyde from L-ornithine: step 1/1. Mediates degradation of arginine for nitrogen recycling. Plays a role in non-host disease resistance by regulating pyrroline-5-carboxylate metabolism-induced hypersensitive response. This Arabidopsis thaliana (Mouse-ear cress) protein is Ornithine aminotransferase, mitochondrial.